A 115-amino-acid chain; its full sequence is MVLLKISSLLAVLGLLVCQMYSSQAAPARRALEPLPDRVTEAHRLLRALIRELTAEDMEASSSGAAHKRSCDTSTCATQRLADFLSRSGGIGSPDFVPTDVSANSFGRRRRSLHV.

A signal peptide spans 1 to 25 (MVLLKISSLLAVLGLLVCQMYSSQA). The propeptide at 26–69 (APARRALEPLPDRVTEAHRLLRALIRELTAEDMEASSSGAAHKR) is removed in mature form by a carboxypeptidase. C71 and C76 form a disulfide bridge. F106 carries the phenylalanine amide modification. A propeptide spans 107–115 (GRRRRSLHV) (removed in mature form by an endoprotease).

As to expression, skin, intestine and brain.

Its subcellular location is the secreted. CGRP induces vasodilation. It dilates a variety of vessels including the coronary, cerebral and systemic vasculature. Its abundance in the CNS also points toward a neurotransmitter or neuromodulator role. This chain is Skin calcitonin gene-related peptide, found in Phyllomedusa bicolor (Two-colored leaf frog).